An 80-amino-acid chain; its full sequence is UPF0154 protein SH1564 (80 aa).

A helical membrane pass occupies residues 4–24; that stretch reads WLAILLIIVALIGGLVGGFFL.

The protein belongs to the UPF0154 family.

It is found in the membrane. This is UPF0154 protein SH1564 from Staphylococcus haemolyticus (strain JCSC1435).